Here is a 291-residue protein sequence, read N- to C-terminus: Probable 2-(5''-triphosphoribosyl)-3'-dephosphocoenzyme-A synthase (291 aa).

Belongs to the CitG/MdcB family.

It catalyses the reaction 3'-dephospho-CoA + ATP = 2'-(5''-triphospho-alpha-D-ribosyl)-3'-dephospho-CoA + adenine. In terms of biological role, involved in the formation of 2-(5''-phosphoribosyl)-3'-dephosphocoenzyme-A, the prosthetic group of the acyl-carrier protein of the malonate decarboxylase. The sequence is that of Probable 2-(5''-triphosphoribosyl)-3'-dephosphocoenzyme-A synthase from Pseudomonas syringae pv. syringae (strain B728a).